Here is a 464-residue protein sequence, read N- to C-terminus: MATGNVGKLVQIIGAVVDIRFSSEEIPALLSAITIQGPDGLVTVEVAQHIGDDTARCVAMRSTDGLVRGMEAIDTGAPITVPVGRETLGRIFNVLGEVVDEGKPVEAKMHLPIHREAPSFEEQEAATEIFETGIKVVDLIAPYARGGKVGLFGGAGVGKTVLIMELINNIAKEHGGLSVFAGVGERTREGNDLYHEMIESGVIDKTSLVYGQMNEPPGARMRVGLTGLTMAEYFRDQEGQDVLLFIDNIFRFTQAGSEVSALLGRMPSAVGYQPTLATEMGALQERITSTKKGSITSVQAVYVPADDLTDPAPATTFAHLDATTVLSRQISELGIYPAVDPLDSNSRILDPATVGQEHYEVARGVQEVLQRYKELQDIIAILGMDELSDEDKLTVARARRVQRFLSQPFFVAEQFTGMAGKYVPLKETIRGFKEILDGKHDDLPESAFLFVGSIDEAVEKANKG.

153–160 (GGAGVGKT) contacts ATP.

It belongs to the ATPase alpha/beta chains family. F-type ATPases have 2 components, CF(1) - the catalytic core - and CF(0) - the membrane proton channel. CF(1) has five subunits: alpha(3), beta(3), gamma(1), delta(1), epsilon(1). CF(0) has three main subunits: a(1), b(2) and c(9-12). The alpha and beta chains form an alternating ring which encloses part of the gamma chain. CF(1) is attached to CF(0) by a central stalk formed by the gamma and epsilon chains, while a peripheral stalk is formed by the delta and b chains.

The protein resides in the cell membrane. It carries out the reaction ATP + H2O + 4 H(+)(in) = ADP + phosphate + 5 H(+)(out). Functionally, produces ATP from ADP in the presence of a proton gradient across the membrane. The catalytic sites are hosted primarily by the beta subunits. The protein is ATP synthase subunit beta of Alkaliphilus metalliredigens (strain QYMF).